Reading from the N-terminus, the 185-residue chain is Ribosome-recycling factor (185 aa).

The protein belongs to the RRF family.

The protein localises to the cytoplasm. Responsible for the release of ribosomes from messenger RNA at the termination of protein biosynthesis. May increase the efficiency of translation by recycling ribosomes from one round of translation to another. The sequence is that of Ribosome-recycling factor from Bacillus cytotoxicus (strain DSM 22905 / CIP 110041 / 391-98 / NVH 391-98).